Here is a 714-residue protein sequence, read N- to C-terminus: ATP-dependent DNA helicase DinG (714 aa).

A Helicase ATP-binding domain is found at 17-294 (ALQDQIPDFI…TCMEQFRPKT (278 aa)). Residue 54–61 (APTGVGKT) participates in ATP binding. [4Fe-4S] cluster is bound by residues cysteine 120, cysteine 194, cysteine 199, and cysteine 205. The DEAH box signature appears at 248–251 (DEGH). A Helicase C-terminal domain is found at 517–698 (HIAEMAAYFR…VFPIEQPAVP (182 aa)).

Belongs to the helicase family. DinG subfamily. Type 1 sub-subfamily. Requires [4Fe-4S] cluster as cofactor.

The catalysed reaction is Couples ATP hydrolysis with the unwinding of duplex DNA at the replication fork by translocating in the 5'-3' direction. This creates two antiparallel DNA single strands (ssDNA). The leading ssDNA polymer is the template for DNA polymerase III holoenzyme which synthesizes a continuous strand.. It catalyses the reaction ATP + H2O = ADP + phosphate + H(+). Its function is as follows. DNA-dependent ATPase and 5'-3' DNA helicase. Unwinds D-loops, R-loops, forked DNA and G-quadruplex DNA. The protein is ATP-dependent DNA helicase DinG of Salmonella typhimurium (strain LT2 / SGSC1412 / ATCC 700720).